We begin with the raw amino-acid sequence, 465 residues long: UDP-N-acetylmuramate--L-alanine ligase (465 aa).

112-118 serves as a coordination point for ATP; that stretch reads GTHGKTT.

Belongs to the MurCDEF family.

It localises to the cytoplasm. The catalysed reaction is UDP-N-acetyl-alpha-D-muramate + L-alanine + ATP = UDP-N-acetyl-alpha-D-muramoyl-L-alanine + ADP + phosphate + H(+). The protein operates within cell wall biogenesis; peptidoglycan biosynthesis. Cell wall formation. The protein is UDP-N-acetylmuramate--L-alanine ligase of Burkholderia pseudomallei (strain 1106a).